The sequence spans 166 residues: Small ribosomal subunit protein uS5 (166 aa).

The 64-residue stretch at 12–75 (YIEKLVQVNR…EAARRNMIQV (64 aa)) folds into the S5 DRBM domain.

It belongs to the universal ribosomal protein uS5 family. As to quaternary structure, part of the 30S ribosomal subunit. Contacts proteins S4 and S8.

With S4 and S12 plays an important role in translational accuracy. In terms of biological role, located at the back of the 30S subunit body where it stabilizes the conformation of the head with respect to the body. The chain is Small ribosomal subunit protein uS5 from Pseudomonas savastanoi pv. phaseolicola (strain 1448A / Race 6) (Pseudomonas syringae pv. phaseolicola (strain 1448A / Race 6)).